The following is a 163-amino-acid chain: Succinate dehydrogenase assembly factor 2, mitochondrial (163 aa).

It belongs to the SDHAF2 family. In terms of assembly, interacts with the flavoprotein subunit within the SDH catalytic dimer.

The protein localises to the mitochondrion matrix. Functionally, plays an essential role in the assembly of succinate dehydrogenase (SDH), an enzyme complex (also referred to as respiratory complex II) that is a component of both the tricarboxylic acid (TCA) cycle and the mitochondrial electron transport chain, and which couples the oxidation of succinate to fumarate with the reduction of ubiquinone (coenzyme Q) to ubiquinol. Required for flavinylation (covalent attachment of FAD) of the flavoprotein subunit of the SDH catalytic dimer. The chain is Succinate dehydrogenase assembly factor 2, mitochondrial from Kluyveromyces lactis (strain ATCC 8585 / CBS 2359 / DSM 70799 / NBRC 1267 / NRRL Y-1140 / WM37) (Yeast).